The primary structure comprises 483 residues: ATP synthase subunit beta, chloroplastic (483 aa).

Residue 163-170 (GGAGVGKT) participates in ATP binding.

This sequence belongs to the ATPase alpha/beta chains family. In terms of assembly, F-type ATPases have 2 components, CF(1) - the catalytic core - and CF(0) - the membrane proton channel. CF(1) has five subunits: alpha(3), beta(3), gamma(1), delta(1), epsilon(1). CF(0) has four main subunits: a(1), b(1), b'(1) and c(9-12).

It is found in the plastid. It localises to the chloroplast thylakoid membrane. It carries out the reaction ATP + H2O + 4 H(+)(in) = ADP + phosphate + 5 H(+)(out). Its function is as follows. Produces ATP from ADP in the presence of a proton gradient across the membrane. The catalytic sites are hosted primarily by the beta subunits. The sequence is that of ATP synthase subunit beta, chloroplastic from Ostreococcus tauri.